The following is a 400-amino-acid chain: NADPH dehydrogenase 2 (400 aa).

FMN is bound by residues threonine 38 and glutamine 115. Substrate contacts are provided by histidine 192 and asparagine 195. Tyrosine 197 (proton donor) is an active-site residue. Arginine 244 and arginine 349 together coordinate FMN. Position 353 is a phosphoserine (serine 353). Tyrosine 376 contacts substrate. Serine 379 is modified (phosphoserine).

It belongs to the NADH:flavin oxidoreductase/NADH oxidase family. In terms of assembly, homodimer or heterodimer with OYE3. It depends on FMN as a cofactor.

The protein resides in the cytoplasm. It is found in the nucleus. The protein localises to the mitochondrion. It catalyses the reaction A + NADPH + H(+) = AH2 + NADP(+). In terms of biological role, flavin-dependent enoate reductase that catalyzes the chemo- and stereoslective hydrogenation of electron-poor alkenes. The enzyme is reduced by NADPH, and oxygen, quinones, and alpha,beta-unsaturated aldehydes and ketones can act as electron acceptors to complete catalytic turnover. The physiological oxidant remains elusive. Has an antioxidant activity, reducing reactive oxygen species (ROS) levels when overexpressed. Formation of OYE2-OYE3 heterodimers contribute to the induction of programmed cell death upon oxidative stress. The protein is NADPH dehydrogenase 2 of Saccharomyces cerevisiae (strain ATCC 204508 / S288c) (Baker's yeast).